The primary structure comprises 474 residues: tRNA-2-methylthio-N(6)-dimethylallyladenosine synthase (474 aa).

An MTTase N-terminal domain is found at 3-120 (KKLHIKTWGC…LPEMINHVQG (118 aa)). Residues Cys-12, Cys-49, Cys-83, Cys-157, Cys-161, and Cys-164 each contribute to the [4Fe-4S] cluster site. The Radical SAM core domain maps to 143–375 (RAEGPTAFVS…QQRISQQAME (233 aa)). A TRAM domain is found at 378-441 (RKMVGTVQRV…ASSLRGILLR (64 aa)).

This sequence belongs to the methylthiotransferase family. MiaB subfamily. As to quaternary structure, monomer. [4Fe-4S] cluster is required as a cofactor.

It is found in the cytoplasm. The enzyme catalyses N(6)-dimethylallyladenosine(37) in tRNA + (sulfur carrier)-SH + AH2 + 2 S-adenosyl-L-methionine = 2-methylsulfanyl-N(6)-dimethylallyladenosine(37) in tRNA + (sulfur carrier)-H + 5'-deoxyadenosine + L-methionine + A + S-adenosyl-L-homocysteine + 2 H(+). In terms of biological role, catalyzes the methylthiolation of N6-(dimethylallyl)adenosine (i(6)A), leading to the formation of 2-methylthio-N6-(dimethylallyl)adenosine (ms(2)i(6)A) at position 37 in tRNAs that read codons beginning with uridine. In Yersinia pestis bv. Antiqua (strain Antiqua), this protein is tRNA-2-methylthio-N(6)-dimethylallyladenosine synthase.